Reading from the N-terminus, the 517-residue chain is Bifunctional purine biosynthesis protein PurH (517 aa).

The MGS-like domain occupies 1–146 (MKRLALLSTS…KNFAHLTVLC (146 aa)).

The protein belongs to the PurH family.

It carries out the reaction (6R)-10-formyltetrahydrofolate + 5-amino-1-(5-phospho-beta-D-ribosyl)imidazole-4-carboxamide = 5-formamido-1-(5-phospho-D-ribosyl)imidazole-4-carboxamide + (6S)-5,6,7,8-tetrahydrofolate. The enzyme catalyses IMP + H2O = 5-formamido-1-(5-phospho-D-ribosyl)imidazole-4-carboxamide. It functions in the pathway purine metabolism; IMP biosynthesis via de novo pathway; 5-formamido-1-(5-phospho-D-ribosyl)imidazole-4-carboxamide from 5-amino-1-(5-phospho-D-ribosyl)imidazole-4-carboxamide (10-formyl THF route): step 1/1. Its pathway is purine metabolism; IMP biosynthesis via de novo pathway; IMP from 5-formamido-1-(5-phospho-D-ribosyl)imidazole-4-carboxamide: step 1/1. In Trichodesmium erythraeum (strain IMS101), this protein is Bifunctional purine biosynthesis protein PurH.